The following is a 456-amino-acid chain: Coenzyme F420 hydrogenase subunit alpha (456 aa).

Ni(2+) contacts are provided by Cys-63, Cys-66, Cys-432, and Cys-435.

It belongs to the [NiFe]/[NiFeSe] hydrogenase large subunit family. As to quaternary structure, pentamer of two alpha chains, two beta chains and a gamma chain. Requires Ni(2+) as cofactor. Iron-sulfur cluster serves as cofactor. FAD is required as a cofactor.

It is found in the cell membrane. The enzyme catalyses oxidized coenzyme F420-(gamma-L-Glu)(n) + H2 + H(+) = reduced coenzyme F420-(gamma-L-Glu)(n). In terms of biological role, reduces the physiological low-potential two-electron acceptor coenzyme F420, and the artificial one-electron acceptor methylviologen. The chain is Coenzyme F420 hydrogenase subunit alpha (frhA) from Methanosarcina barkeri (strain Fusaro / DSM 804).